A 1218-amino-acid polypeptide reads, in one-letter code: NACHT, LRR and PYD domains-containing protein 1a allele 4 (1218 aa).

Residues 1-29 (MGESQSKQESNTRVAQHGSQQDVDPTFQT) are compositionally biased toward polar residues. Disordered stretches follow at residues 1–44 (MGES…QVEQ) and 71–91 (EMDH…DRSE). Basic residues predominate over residues 77-87 (RRHSHQSKKKL). Residues 175 to 484 (QLVIIEGAAG…EFFAAMSYIL (310 aa)) form the NACHT domain. 181-188 (GAAGIGKS) provides a ligand contact to ATP. LRR repeat units lie at residues 343-364 (KERN…LTLC), 673-693 (NLEE…RSLC), and 730-750 (RLAE…RQLC). The span at 799–815 (TMPTENTDGEESLTSSK) shows a compositional bias: polar residues. The segment at 799–842 (TMPTENTDGEESLTSSKQQQQQSGDKHMEPLGTDDDFWGPSGPV) is disordered. Residues 835 to 968 (FWGPSGPVST…HFAVLENPSF (134 aa)) are ZU5. Residues 835 to 1118 (FWGPSGPVST…LRPALPRMAS (284 aa)) form the FIIND domain. Positions 969-1118 (SPMGVLLRMI…LRPALPRMAS (150 aa)) are UPA. One can recognise a CARD domain in the interval 1122–1211 (DAPALLHFVD…HLIMDLLEKS (90 aa)).

This sequence belongs to the NLRP family. In terms of assembly, interacts (via LRR repeats) with BCL2 and BCL2L1 (via the loop between motifs BH4 and BH3). Interacts with NOD2; this interaction is enhanced in the presence of muramyl dipeptide (MDP) and increases IL1B release. Interacts with EIF2AK2/PKR; this interaction requires EIF2AK2 activity, is accompanied by EIF2AK2 autophosphorylation and promotes inflammasome assembly in response to danger-associated signals. Interacts with MEFV; this interaction targets Nlrp1a to degradation by autophagy, hence preventing excessive IL1B- and IL18-mediated inflammation. Interacts with DPP9; leading to inhibit activation of the inflammasome. DPP9 acts via formation of a ternary complex, composed of a DPP9 homodimer, one full-length NLRP1 protein, and one cleaved C-terminus of Nlrp1a (NACHT, LRR and PYD domains-containing protein 1a, C-terminus). Interacts with DPP8; leading to inhibit activation of the inflammasome, probably via formation of a ternary complex with DPP8. As to quaternary structure, interacts with the C-terminal part of Nlrp1a (NACHT, LRR and PYD domains-containing protein 1a, C-terminus) in absence of pathogens and other damage-associated signals. Interacts with the N-terminal part of Nlrp1a (NACHT, LRR and PYD domains-containing protein 1a, N-terminus) in absence of pathogens and other damage-associated signals. Homomultimer; forms the Nlrp1a inflammasome polymeric complex, a filament composed of homopolymers of this form in response to pathogens and other damage-associated signals. The Nlrp1a inflammasome polymeric complex directly recruits pro-caspase-1 (proCASP1) independently of PYCARD/ASC. Interacts (via CARD domain) with CASP1 (via CARD domain); leading to CASP1 activation. Autocatalytically cleaved. Autocatalytic cleavage in FIIND region occurs constitutively, prior to activation signals, and is required for inflammasome activity (IL1B release), possibly by facilitating CASP1 binding. Both N- and C-terminal parts remain associated non-covalently. Post-translationally, ubiquitinated in response to pathogen-associated signals, leading to its degradation by the proteasome and subsequent release of the cleaved C-terminal part of the protein (NACHT, LRR and PYD domains-containing protein 1a, C-terminus), which polymerizes and forms the Nlrp1a inflammasome.

It is found in the cytoplasm. It localises to the cytosol. The protein resides in the nucleus. The protein localises to the inflammasome. With respect to regulation, activated by pathogens and other damage-associated signals: activation promotes ubiquitination and degradation of the N-terminal part, releasing the cleaved C-terminal part of the protein (NACHT, LRR and PYD domains-containing protein 1a, C-terminus), which polymerizes and forms the Nlrp1a inflammasome. Nlrp1a inflammasome is inhibited by DPP8 and DPP9, which sequester the C-terminal fragment of Nlrp1a (NACHT, LRR and PYD domains-containing protein 1a, C-terminus) in a ternary complex, thereby preventing Nlrp1a oligomerization and activation. Nlrp1a inflammasome is strongly activated by Val-boroPro (Talabostat, PT-100), an inhibitor of dipeptidyl peptidases DPP8 and DPP9. Val-boroPro relieves inhibition of DPP8 and/or DPP9 by promoting disruption of the ternary complex, releasing its C-terminal part from autoinhibition. Not activated by cleavage by B.anthracis lethal toxin (LT) endopeptidase. In terms of biological role, acts as the sensor component of the Nlrp1a inflammasome, which mediates inflammasome activation in response to various pathogen-associated signals, leading to subsequent pyroptosis. Inflammasomes are supramolecular complexes that assemble in the cytosol in response to pathogens and other damage-associated signals and play critical roles in innate immunity and inflammation. Acts as a recognition receptor (PRR): recognizes specific pathogens and other damage-associated signals, such as Val-boroPro inhibitor, and mediates the formation of the inflammasome polymeric complex. In response to pathogen-associated signals, the N-terminal part of Nlrp1a is degraded by the proteasome, releasing the cleaved C-terminal part of the protein (NACHT, LRR and PYD domains-containing protein 1a, C-terminus), which polymerizes to initiate the formation of the inflammasome complex: the inflammasome directly recruits pro-caspase-1 (proCASP1) independently of PYCARD/ASC and promotes caspase-1 (CASP1) activation, which subsequently cleaves and activates inflammatory cytokines IL1B and IL18 and gasdermin-D (GSDMD), leading to pyroptosis. In the absence of GSDMD expression, the Nlrp1a inflammasome is able to recruit and activate CASP8, leading to activation of gasdermin-E (GSDME). Its function is as follows. Constitutes the precursor of the Nlrp1a inflammasome, which mediates autoproteolytic processing within the FIIND domain to generate the N-terminal and C-terminal parts, which are associated non-covalently in absence of pathogens and other damage-associated signals. Functionally, regulatory part that prevents formation of the Nlrp1a inflammasome: in absence of pathogens and other damage-associated signals, interacts with the C-terminal part of Nlrp1a (NACHT, LRR and PYD domains-containing protein 1a, C-terminus), preventing activation of the Nlrp1a inflammasome. In response to pathogen-associated signals, this part is ubiquitinated by the N-end rule pathway and degraded by the proteasome, releasing the cleaved C-terminal part of the protein, which polymerizes and forms the Nlrp1a inflammasome. Constitutes the active part of the Nlrp1a inflammasome. In absence of pathogens and other damage-associated signals, interacts with the N-terminal part of Nlrp1a (NACHT, LRR and PYD domains-containing protein 1a, N-terminus), preventing activation of the Nlrp1a inflammasome. In response to pathogen-associated signals, the N-terminal part of Nlrp1a is degraded by the proteasome, releasing this form, which polymerizes to form the Nlrp1a inflammasome complex: the Nlrp1a inflammasome complex then directly recruits pro-caspase-1 (proCASP1) and promotes caspase-1 (CASP1) activation, leading to gasdermin-D (GSDMD) cleavage and subsequent pyroptosis. The protein is NACHT, LRR and PYD domains-containing protein 1a allele 4 of Rattus norvegicus (Rat).